The chain runs to 205 residues: Thiamine-phosphate synthase (205 aa).

4-amino-2-methyl-5-(diphosphooxymethyl)pyrimidine is bound by residues 35 to 39 (QYRDK) and Asn67. Residues Asp68 and Asp86 each contribute to the Mg(2+) site. Thr105 serves as a coordination point for 4-amino-2-methyl-5-(diphosphooxymethyl)pyrimidine. A 2-[(2R,5Z)-2-carboxy-4-methylthiazol-5(2H)-ylidene]ethyl phosphate-binding site is contributed by 132 to 134 (SQT). Lys135 serves as a coordination point for 4-amino-2-methyl-5-(diphosphooxymethyl)pyrimidine. A 2-[(2R,5Z)-2-carboxy-4-methylthiazol-5(2H)-ylidene]ethyl phosphate-binding site is contributed by Gly162.

It belongs to the thiamine-phosphate synthase family. Requires Mg(2+) as cofactor.

The enzyme catalyses 2-[(2R,5Z)-2-carboxy-4-methylthiazol-5(2H)-ylidene]ethyl phosphate + 4-amino-2-methyl-5-(diphosphooxymethyl)pyrimidine + 2 H(+) = thiamine phosphate + CO2 + diphosphate. The catalysed reaction is 2-(2-carboxy-4-methylthiazol-5-yl)ethyl phosphate + 4-amino-2-methyl-5-(diphosphooxymethyl)pyrimidine + 2 H(+) = thiamine phosphate + CO2 + diphosphate. It carries out the reaction 4-methyl-5-(2-phosphooxyethyl)-thiazole + 4-amino-2-methyl-5-(diphosphooxymethyl)pyrimidine + H(+) = thiamine phosphate + diphosphate. The protein operates within cofactor biosynthesis; thiamine diphosphate biosynthesis; thiamine phosphate from 4-amino-2-methyl-5-diphosphomethylpyrimidine and 4-methyl-5-(2-phosphoethyl)-thiazole: step 1/1. Condenses 4-methyl-5-(beta-hydroxyethyl)thiazole monophosphate (THZ-P) and 2-methyl-4-amino-5-hydroxymethyl pyrimidine pyrophosphate (HMP-PP) to form thiamine monophosphate (TMP). This is Thiamine-phosphate synthase from Pseudomonas syringae pv. tomato (strain ATCC BAA-871 / DC3000).